Consider the following 1403-residue polypeptide: DNA-directed RNA polymerase subunit beta' (1403 aa).

4 residues coordinate Zn(2+): Cys-70, Cys-72, Cys-85, and Cys-88. Mg(2+) is bound by residues Asp-461, Asp-463, and Asp-465. Residues Cys-816, Cys-890, Cys-897, and Cys-900 each coordinate Zn(2+).

It belongs to the RNA polymerase beta' chain family. As to quaternary structure, the RNAP catalytic core consists of 2 alpha, 1 beta, 1 beta' and 1 omega subunit. When a sigma factor is associated with the core the holoenzyme is formed, which can initiate transcription. Mg(2+) is required as a cofactor. The cofactor is Zn(2+).

It carries out the reaction RNA(n) + a ribonucleoside 5'-triphosphate = RNA(n+1) + diphosphate. Its function is as follows. DNA-dependent RNA polymerase catalyzes the transcription of DNA into RNA using the four ribonucleoside triphosphates as substrates. The polypeptide is DNA-directed RNA polymerase subunit beta' (Dechloromonas aromatica (strain RCB)).